The primary structure comprises 356 residues: Leucine-rich repeat and transmembrane domain-containing protein 1 (356 aa).

The first 32 residues, 1–32 (MLNEGLCCGAWAMKGTLLLVSSVGLLLPGVGS), serve as a signal peptide directing secretion. Residues 33-62 (CPMKCLCHPSSNSVDCSGQGLSKVPRDLPP) form the LRRNT domain. The Extracellular portion of the chain corresponds to 33 to 299 (CPMKCLCHPS…PTNLRHAVAT (267 aa)). LRR repeat units lie at residues 63-84 (WTVTLLLQDNRIHWLPALAFQS), 87-108 (LLSTLNLSNNSLSNLAAEAFYG), 111-132 (HLRVLNVTQNSLLSIESSFAHA), 135-156 (GLRELDLSSNSLRILPTSLGKP), and 159-180 (NLTVFAVQQNHLLHLDRELLEA). N-linked (GlcNAc...) asparagine glycans are attached at residues Asn92 and Asn116. N-linked (GlcNAc...) asparagine glycosylation is present at Asn159. In terms of domain architecture, LRRCT spans 192–246 (NPWICDCHLLGLKLWLERFTFQGGETDGAICRLPEPWQGKALLSIPHELYQPCSL). The span at 255-277 (LVQQPGSAPQDAQKSHENSSGQQ) shows a compositional bias: polar residues. Residues 255–288 (LVQQPGSAPQDAQKSHENSSGQQDPLECEAKPKP) form a disordered region. A helical membrane pass occupies residues 300–320 (VVITGVVCGIVCLMMLAAAIY). The Cytoplasmic portion of the chain corresponds to 321 to 356 (GCTYAAITAQYQGRPLASARKSEKMGSKELMDSSSA).

The protein localises to the membrane. This chain is Leucine-rich repeat and transmembrane domain-containing protein 1 (Lrtm1), found in Mus musculus (Mouse).